A 238-amino-acid chain; its full sequence is NADH-quinone oxidoreductase subunit I (238 aa).

4Fe-4S ferredoxin-type domains lie at 81–111 and 123–152; these read LVPR…IEAG and VKFV…MDSG. 8 residues coordinate [4Fe-4S] cluster: cysteine 91, cysteine 94, cysteine 97, cysteine 101, cysteine 132, cysteine 135, cysteine 138, and cysteine 142.

It belongs to the complex I 23 kDa subunit family. As to quaternary structure, NDH-1 is composed of 14 different subunits. Subunits NuoA, H, J, K, L, M, N constitute the membrane sector of the complex. Requires [4Fe-4S] cluster as cofactor.

The protein localises to the cell inner membrane. The catalysed reaction is a quinone + NADH + 5 H(+)(in) = a quinol + NAD(+) + 4 H(+)(out). Its function is as follows. NDH-1 shuttles electrons from NADH, via FMN and iron-sulfur (Fe-S) centers, to quinones in the respiratory chain. The immediate electron acceptor for the enzyme in this species is believed to be ubiquinone. Couples the redox reaction to proton translocation (for every two electrons transferred, four hydrogen ions are translocated across the cytoplasmic membrane), and thus conserves the redox energy in a proton gradient. This is NADH-quinone oxidoreductase subunit I from Anaeromyxobacter sp. (strain Fw109-5).